The primary structure comprises 54 residues: Ribulose bisphosphate carboxylase large chain (54 aa).

Residues 1-2 (MS) constitute a propeptide that is removed on maturation. N-acetylproline is present on proline 3. Lysine 14 is subject to N6,N6,N6-trimethyllysine.

It belongs to the RuBisCO large chain family. Type I subfamily. As to quaternary structure, heterohexadecamer of 8 large chains and 8 small chains.

The protein resides in the plastid. It is found in the chloroplast. The enzyme catalyses 2 (2R)-3-phosphoglycerate + 2 H(+) = D-ribulose 1,5-bisphosphate + CO2 + H2O. The catalysed reaction is D-ribulose 1,5-bisphosphate + O2 = 2-phosphoglycolate + (2R)-3-phosphoglycerate + 2 H(+). In terms of biological role, ruBisCO catalyzes two reactions: the carboxylation of D-ribulose 1,5-bisphosphate, the primary event in carbon dioxide fixation, as well as the oxidative fragmentation of the pentose substrate in the photorespiration process. Both reactions occur simultaneously and in competition at the same active site. This Colletia hystrix (Crucifixion thorn) protein is Ribulose bisphosphate carboxylase large chain (rbcL).